The sequence spans 628 residues: tRNA uridine 5-carboxymethylaminomethyl modification enzyme MnmG (628 aa).

FAD-binding positions include 14–19, Val-126, and Ser-181; that span reads GAGHAG. 273–287 is a binding site for NAD(+); it reads GPRYCPSIEDKVVRF. Gln-370 contributes to the FAD binding site.

Belongs to the MnmG family. Homodimer. Heterotetramer of two MnmE and two MnmG subunits. FAD is required as a cofactor.

It localises to the cytoplasm. In terms of biological role, NAD-binding protein involved in the addition of a carboxymethylaminomethyl (cmnm) group at the wobble position (U34) of certain tRNAs, forming tRNA-cmnm(5)s(2)U34. The polypeptide is tRNA uridine 5-carboxymethylaminomethyl modification enzyme MnmG (Exiguobacterium sibiricum (strain DSM 17290 / CCUG 55495 / CIP 109462 / JCM 13490 / 255-15)).